The chain runs to 682 residues: MSRKQLALFEPVLLVQALTDAVKKLSPRAQWRNPVMFVVWAGSVLTTLLTLAMVTGQIAGSALFTGIISLWLWFTVLFANFAEALAEGRSKAQANSLKGVKKTAFARRLRAPRHDAQADNVPAAELRKGDIVLVKAGDIIPCDGEVIEGGASVDESAITGESAPVIRESGGDFASVTGGTRILSDWLVIACSVNPGETFLDRMIAMVEGAQRRKTPNEIALTILLIALTIVFLLATATLWPFSAWGGNAVSVTVLVALLVCLIPTTIGGLLSAIGVAGMSRMLGANVIATSGRAVEAAGDVDVLLLDKTGTITLGNRQASDFIPARGVDERTLADAAQLASLADETPEGRSIVILAKQRFNLRERDVQSLHATFVPFTAQSRMSGINIDNRMIRKGSVDAIRRHVESNGGHFPADVEQNVENVARLGATPLVVVEGAHVLGVIALKDIVKGGIKERFAQLRKMGIKTVMITGDNRLTAAAIAAEAGVDDFLAEATPEAKLALIRQYQAEGRLVAMTGDGTNDAPALAQADVAVAMNSGTQAAKEAGNMVDLDSNPTKLIEVVHIGKQMLMTRGSLTTFSIANDVAKYFAIIPAAFAATYPQLNALNVMGLHSPNSAILSAVIFNALIIIFLIPLALKGVSYKPLSASAMLRRNLWIYGLGGLVVPFIGIKVIDVLLTLLGLA.

4 helical membrane-spanning segments follow: residues 34-54 (PVMF…LAMV), 58-78 (IAGS…TVLF), 219-239 (IALT…TATL), and 254-274 (VLVA…LSAI). The active-site 4-aspartylphosphate intermediate is Asp-307. ATP contacts are provided by residues Asp-344, Glu-348, 377–384 (FTAQSRMS), and Lys-395. Mg(2+) is bound by residues Asp-518 and Asp-522. A run of 3 helical transmembrane segments spans residues 588 to 608 (FAII…LNVM), 616 to 636 (AILS…PLAL), and 662 to 682 (LVVP…LGLA).

It belongs to the cation transport ATPase (P-type) (TC 3.A.3) family. Type IA subfamily. In terms of assembly, the system is composed of three essential subunits: KdpA, KdpB and KdpC.

It is found in the cell inner membrane. The catalysed reaction is K(+)(out) + ATP + H2O = K(+)(in) + ADP + phosphate + H(+). In terms of biological role, part of the high-affinity ATP-driven potassium transport (or Kdp) system, which catalyzes the hydrolysis of ATP coupled with the electrogenic transport of potassium into the cytoplasm. This subunit is responsible for energy coupling to the transport system and for the release of the potassium ions to the cytoplasm. The polypeptide is Potassium-transporting ATPase ATP-binding subunit (Salmonella typhimurium (strain LT2 / SGSC1412 / ATCC 700720)).